The chain runs to 496 residues: Thiamine transporter 2 (496 aa).

The Cytoplasmic portion of the chain corresponds to 1 to 7 (MDCYRTS). The helical transmembrane segment at 8–28 (LSSSWIYPTVILCLFGFFSMM) threads the bilayer. Residues 29 to 53 (RPSEPFLIPYLSGPDKNLTSAEITN) lie on the Extracellular side of the membrane. Asparagine 45 carries N-linked (GlcNAc...) asparagine glycosylation. Residues 54 to 74 (EIFPVWTYSYLVLLLPVFVLT) traverse the membrane as a helical segment. Over 75-81 (DYVRYKP) the chain is Cytoplasmic. Residues 82–102 (VIILQGISFIITWLLLLFGQG) traverse the membrane as a helical segment. The Extracellular segment spans residues 103–110 (VKTMQVVE). Residues 111–131 (FFYGMVTAAEVAYYAYIYSVV) traverse the membrane as a helical segment. The Cytoplasmic segment spans residues 132-144 (SPEHYQRVSGYCR). A helical membrane pass occupies residues 145–165 (SVTLAAYTAGSVLAQLLVSLA). N-linked (GlcNAc...) asparagine glycosylation occurs at asparagine 166. Residues 166 to 169 (NMSY) are Extracellular-facing. The chain crosses the membrane as a helical span at residues 170–190 (FYLNVISLASVSVAFLFSLFL). The Cytoplasmic portion of the chain corresponds to 191 to 282 (PMPKKSMFFH…YSSKRLFYWS (92 aa)). A helical membrane pass occupies residues 283-303 (LWWAFATAGFNQVLNYVQILW). Topologically, residues 304 to 316 (DYKAPSQDSSIYN) are extracellular. Residues 317 to 337 (GAVEAIATFGGAVAAFAVGYV) traverse the membrane as a helical segment. Residues 338 to 342 (KVNWD) are Cytoplasmic-facing. Residues 343–363 (LLGELALVVFSVVNAGSLFLM) traverse the membrane as a helical segment. Residues 364 to 375 (HYTANIWACYAG) lie on the Extracellular side of the membrane. The helical transmembrane segment at 376–396 (YLIFKSSYMLLITIAVFQIAV) threads the bilayer. Topologically, residues 397–405 (NLNVERYAL) are cytoplasmic. The chain crosses the membrane as a helical span at residues 406–426 (VFGINTFIALVIQTIMTVIVV). Residues 427–434 (DQRGLNLP) lie on the Extracellular side of the membrane. A helical transmembrane segment spans residues 435–455 (VSIQFLVYGSYFAVIAGIFLM). The Cytoplasmic segment spans residues 456–496 (RSMYITYSTKSQKDVQSPAPSENPDVSHPEEESNIIMSTKL). Residues 468 to 496 (KDVQSPAPSENPDVSHPEEESNIIMSTKL) are disordered.

The protein belongs to the reduced folate carrier (RFC) transporter (TC 2.A.48) family. Widely expressed but most abundant in placenta, kidney and liver.

It localises to the membrane. It catalyses the reaction thiamine(out) + H(+)(in) = thiamine(in) + H(+)(out). The enzyme catalyses pyridoxine(out) + n H(+)(out) = pyridoxine(in) + n H(+)(in). Its activity is regulated as follows. Pyridoxine transport is inhibited by carbonyl cyanide p-trifluoromethoxyphenylhydrazone (FCCP) and carbonyl cyanide m-chlorophenylhydrazone (CCCP). Mediates high affinity thiamine uptake, probably via a proton anti-port mechanism. Has no folate transport activity. Mediates H(+)-dependent pyridoxine transport. This chain is Thiamine transporter 2 (SLC19A3), found in Homo sapiens (Human).